Here is a 354-residue protein sequence, read N- to C-terminus: S-adenosylmethionine:tRNA ribosyltransferase-isomerase (354 aa).

This sequence belongs to the QueA family. As to quaternary structure, monomer.

Its subcellular location is the cytoplasm. The enzyme catalyses 7-aminomethyl-7-carbaguanosine(34) in tRNA + S-adenosyl-L-methionine = epoxyqueuosine(34) in tRNA + adenine + L-methionine + 2 H(+). It participates in tRNA modification; tRNA-queuosine biosynthesis. Transfers and isomerizes the ribose moiety from AdoMet to the 7-aminomethyl group of 7-deazaguanine (preQ1-tRNA) to give epoxyqueuosine (oQ-tRNA). The polypeptide is S-adenosylmethionine:tRNA ribosyltransferase-isomerase (Thermosynechococcus vestitus (strain NIES-2133 / IAM M-273 / BP-1)).